We begin with the raw amino-acid sequence, 382 residues long: Ribosomal RNA large subunit methyltransferase F (382 aa).

2 disordered regions span residues 1–53 (MTKP…LHRD) and 269–288 (NRAS…KSQL). The span at 8–24 (ASRKPVTKSGRNSKRSR) shows a compositional bias: basic residues. Positions 269–286 (NRASKGHKLEPKAPKDKS) are enriched in basic and acidic residues.

It belongs to the methyltransferase superfamily. METTL16/RlmF family.

The protein resides in the cytoplasm. The catalysed reaction is adenosine(1618) in 23S rRNA + S-adenosyl-L-methionine = N(6)-methyladenosine(1618) in 23S rRNA + S-adenosyl-L-homocysteine + H(+). Its function is as follows. Specifically methylates the adenine in position 1618 of 23S rRNA. In Shewanella woodyi (strain ATCC 51908 / MS32), this protein is Ribosomal RNA large subunit methyltransferase F.